We begin with the raw amino-acid sequence, 491 residues long: Sodium-dependent glucose transporter 1 (491 aa).

The next 11 membrane-spanning stretches (helical) occupy residues 26 to 46 (FIFV…GILF), 52 to 72 (HLLL…VPWC), 81 to 101 (VMSV…IIIL), 119 to 139 (FALG…FLPL), 165 to 185 (LSYI…FILF), 210 to 230 (AVIF…VAYG), 255 to 275 (LFWG…TCLY), 277 to 297 (GTML…LVLF), 303 to 323 (LLWV…PSGF), 338 to 358 (SLFV…VGYL), and 365 to 385 (FPVL…LFPV). 2 disordered regions span residues 397–425 (AQYN…DEAQ) and 438–491 (NDQM…EKND). Acidic residues predominate over residues 416-425 (MEEEDEDEAQ). A compositionally biased stretch (polar residues) spans 440–458 (QMKNSVTVISEDTPGNSAP).

This sequence belongs to the major facilitator superfamily.

Its subcellular location is the apical cell membrane. In terms of biological role, may function as a sodium-dependent glucose transporter. Potential channels for urea in the inner medulla of kidney. In Xenopus laevis (African clawed frog), this protein is Sodium-dependent glucose transporter 1 (mfsd4b).